The primary structure comprises 230 residues: Large ribosomal subunit protein uL1 (230 aa).

It belongs to the universal ribosomal protein uL1 family. Part of the 50S ribosomal subunit.

In terms of biological role, binds directly to 23S rRNA. The L1 stalk is quite mobile in the ribosome, and is involved in E site tRNA release. Protein L1 is also a translational repressor protein, it controls the translation of the L11 operon by binding to its mRNA. This is Large ribosomal subunit protein uL1 from Bacillus cereus (strain B4264).